A 1067-amino-acid chain; its full sequence is Zinc finger MIZ domain-containing protein 1 (1067 aa).

The tract at residues 1 to 120 (MNSMDRHIQQ…HQKSRQSDPP (120 aa)) is sufficient for transactivation activity; sufficient for interaction with NOTCH1. A Glycyl lysine isopeptide (Lys-Gly) (interchain with G-Cter in SUMO2) cross-link involves residue K91. Disordered stretches follow at residues 112–141 (QKSRQSDPPGKLPMQPPLSSMSSMKPTLSH) and 327–542 (NSQF…PFPP). Positions 128-141 (PLSSMSSMKPTLSH) are enriched in low complexity. The span at 413–429 (YGNQQYGPNSQFPTQPG) shows a compositional bias: polar residues. The span at 431–440 (YPAPNPPRPL) shows a compositional bias: pro residues. The segment covering 479 to 497 (NNTFSGSSYSNYSQGNVNR) has biased composition (low complexity). Over residues 510–521 (SPVPGNPTPPMT) the composition is skewed to pro residues. Residues 727-808 (GEDGVEQTAI…MWGILNAIQH (82 aa)) form an SP-RING-type zinc finger. Residues C758, H760, C781, and C784 each coordinate Zn(2+). Residues K834 and K843 each participate in a glycyl lysine isopeptide (Lys-Gly) (interchain with G-Cter in SUMO2) cross-link. A transactivation domain region spans residues 837–1067 (PDGIPSKRFK…DDLLSLFENN (231 aa)). The segment covering 868–879 (GPSPYPLPPPPG) has biased composition (pro residues). A disordered region spans residues 868–1067 (GPSPYPLPPP…DDLLSLFENN (200 aa)). Composition is skewed to polar residues over residues 881 to 895 (TNSNDYSSQGNNYQG) and 951 to 961 (SSDQPHPSIQQ). Pro residues predominate over residues 981–996 (APPPPPSQPPRQPPQA). Low complexity predominate over residues 1040–1067 (PDELLSYLDPPDLPSNSNDDLLSLFENN).

Interacts with AR, but not with ESR1, NR3C1, PGR, THRB nor VDR. Interacts with NOTCH1 and RBPJ. Interacts with SMARCA4. Interacts (via SP-RING-type domain) with SMAD3 and SMAD4 (via MH2 domain). Expressed most abundantly in ovary and, at lower levels, in prostate, spleen and testis. Weak expression, if any, in thymus, small intestine, colon and peripheral blood leukocytes.

Its subcellular location is the nucleus. The protein resides in the nucleoplasm. The protein localises to the cytoplasm. Its function is as follows. Acts as a transcriptional coactivator. Increases ligand-dependent transcriptional activity of AR and promotes AR sumoylation. The stimulation of AR activity is dependent upon sumoylation. Also functions as a transcriptional coactivator in the TGF-beta signaling pathway by increasing the activity of the SMAD3/SMAD4 transcriptional complex. Involved in transcriptional activation of a subset of NOTCH1 target genes including MYC. Involved in thymocyte and T cell development. Involved in the regulation of postmitotic positioning of pyramidal neurons in the developing cerebral cortex. The chain is Zinc finger MIZ domain-containing protein 1 from Homo sapiens (Human).